A 271-amino-acid chain; its full sequence is MVVKKPRPKKKPVTKKVAPAPLAVKKPVVKKVVNQLFEKRPKNFGIGQNVQPKRDLSRFVRWPKYIRVQRQKAVLQKRLKVPPPIHQFSQTLDKTTAVKLFKLLEKYRPESPLAKKLRLKKIAEAKAKGKDVEPKKKPSYVSAGTNTVTKLIEQKKAQLVVIAHDVDPLELVLFLPALCRKMGVPYCIVKGKARLGRLVRRKTCTTLALTTVDNNDKANFGKVLEAVKTNFNERHEEIRRHWGGGILGSKSLARISKLERAKARELAQKQG.

It belongs to the eukaryotic ribosomal protein eL8 family.

This is Large ribosomal subunit protein eL8 (RpL7A) from Drosophila melanogaster (Fruit fly).